Here is a 258-residue protein sequence, read N- to C-terminus: Enterotoxin type D (258 aa).

The signal sequence occupies residues 1–25; the sequence is MKKFNILIALLFFTSLVISPLNVKA. Zn(2+) contacts are provided by Asp-212, His-248, His-250, and Asp-252.

The protein belongs to the staphylococcal/streptococcal toxin family. Homodimer; zinc-dependent. Interacts with MHC class II molecules composed of alpha/HLA-DRA and beta/HLA-DRB1 chains. Zn(2+) is required as a cofactor.

It is found in the secreted. Staphylococcal enterotoxin that activates the host immune system by binding as unprocessed molecules to major histocompatibility (MHC) complex class II and T-cell receptor (TCR) molecules. In turn, this ternary complex activates a large number of T-lymphocytes initiating a systemic release of pro-inflammatory cytokines. In addition, induces B-cell proliferation and differentiation in the presence of T-cells. Causes also the intoxication staphylococcal food poisoning syndrome. The polypeptide is Enterotoxin type D (entD) (Staphylococcus aureus).